The primary structure comprises 425 residues: MAGSNDVAKVMKTLDGMREGLIQTAVELGSIEAPTGREGAAGDYVYEWMARNGFGPERVGVFDDRFNVVGRLRGTGGGASLSFNSHLDTIMAREDTARFADANDRIYHEAWHEEGRIYGYSVVNCKGPMACWLIAAKALKEAGAALKGDVVLTAVCGEIDCEPVDEFQGHDYLAEDIGARYAISHGAISDYALVAEATNFKPAWVEAGKVFLKVTVFAGPSRYTPYVPRPVAALDSPNAIVRMAKLVEALEEWADNYEKRYTREYGGGTVVPKVAIGAIRGGVPYKIYRFPELCSIYMDIRLNPDTNPLVVQREVEAVVSKLGLKAEVKPFLFRRGYEAQGIEPLQNALEVAHREVVGRPTERPGSPECSMWRDTNPYNELGIPSLTYGCGGGAGGGNTYFLVDDMLKAAKVYAMTAMDLCNRTP.

The active site involves aspartate 88. Glutamate 158 (proton acceptor) is an active-site residue.

Belongs to the peptidase M20A family. It depends on Co(2+) as a cofactor. Mn(2+) is required as a cofactor. Requires Zn(2+) as cofactor. The cofactor is Fe(2+). Ni(2+) serves as cofactor.

It carries out the reaction 5-nitroanthranilate + H2O + H(+) = 5-nitrosalicylate + NH4(+). In terms of biological role, catalyzes the deamination of 5-nitroanthranilate (5NAA) to 5-nitrosalicylate (5NSA), the first step in biodegradation of 5-nitroanthranilate. The chain is 5-nitroanthranilic acid aminohydrolase (naaA) from Bradyrhizobium sp.